A 495-amino-acid polypeptide reads, in one-letter code: 4-aminobutyrate aminotransferase (495 aa).

160-161 (GS) serves as a coordination point for pyridoxal 5'-phosphate. Arg-216 provides a ligand contact to substrate. Residue Lys-350 is modified to N6-(pyridoxal phosphate)lysine. Pyridoxal 5'-phosphate is bound at residue Thr-374.

Belongs to the class-III pyridoxal-phosphate-dependent aminotransferase family. Homodimer. Pyridoxal 5'-phosphate is required as a cofactor.

The enzyme catalyses 4-aminobutanoate + 2-oxoglutarate = succinate semialdehyde + L-glutamate. This is 4-aminobutyrate aminotransferase (gabT) from Dictyostelium discoideum (Social amoeba).